The primary structure comprises 93 residues: Em protein (93 aa).

The disordered stretch occupies residues 1 to 93 (MASGQQERSQ…IDESKFKTKS (93 aa)). 3 stretches are compositionally biased toward basic and acidic residues: residues 9–19 (SQLDRKAREGE), 38–52 (AEGR…REQM), and 73–93 (GGDR…KTKS).

Belongs to the small hydrophilic plant seed protein family.

Functionally, it is thought to provide protection for the cytoplasm during the desiccation stage of embryo development. In Triticum aestivum (Wheat), this protein is Em protein (EM).